The primary structure comprises 316 residues: uncharacterized protein (316 aa).

Residues 16–89 (ERLDKFLARA…IPINIIYEDE (74 aa)) enclose the S4 RNA-binding domain. The active site involves Asp-140.

It belongs to the pseudouridine synthase RluA family.

It catalyses the reaction a uridine in RNA = a pseudouridine in RNA. This is an uncharacterized protein from Aquifex aeolicus (strain VF5).